Consider the following 286-residue polypeptide: Inositol polyphosphate multikinase alpha (286 aa).

Residues 1-22 form a disordered region; it reads MQLKVPEHQVAGHIAKDGKPGP.

The protein belongs to the inositol phosphokinase (IPK) family. Post-translationally, phosphorylated. In terms of tissue distribution, detected in leaves, stems, roots, siliques and flowers. Highly expressed in root tissues, anthers, the stigma, pollen grains and growing pollen tubes.

It localises to the nucleus. Its subcellular location is the cell membrane. It carries out the reaction 1D-myo-inositol 1,4,5-trisphosphate + 2 ATP = 1D-myo-inositol 1,3,4,5,6-pentakisphosphate + 2 ADP + 2 H(+). The enzyme catalyses 1D-myo-inositol 1,3,4,6-tetrakisphosphate + ATP = 1D-myo-inositol 1,3,4,5,6-pentakisphosphate + ADP + H(+). Inositol phosphate kinase with a broad substrate specificity. Phosphorylates inositol 1,4,5-trisphosphate (Ins(1,4,5)P3), inositol 1,4,5,6-tetrakisphosphate (Ins(1,4,5,6)P4), inositol 1,3,4,5-tetrakisphosphate (Ins(1,3,4,5)P4), inositol 1,3,4,6-tetrakisphosphate (Ins(1,3,4,6)P4) and inositol 1,2,3,4,6-pentakisphosphate (Ins(1,2,3,4,6)P5) but not inositol 1,4-bisphosphate (Ins(1,4)P2), inositol 1,3,4-trisphosphate (Ins(1,3,4)P3), inositol 1,2,6-trisphosphate (Ins(1,2,6)P3), inositol 3,4,5,6-tetrakisphosphate (Ins(3,4,5,6)P4), inositol 1,3,4,5,6-pentakisphosphate (Ins(1,3,4,5,6)P5), inositol 1,2,4,5,6-pentakisphosphate (Ins(1,2,4,5,6)P5) or inositol hexakisphosphate (InsP6). Regulates pollen and root development probably through the regulation of InsP3-mediated calcium accumulation. The sequence is that of Inositol polyphosphate multikinase alpha (IPK2a) from Arabidopsis thaliana (Mouse-ear cress).